The primary structure comprises 302 residues: Small ribosomal subunit biogenesis GTPase RsgA (302 aa).

The CP-type G domain occupies 75 to 233 (KNELIRPAVS…IMDTPGFSSM (159 aa)). GTP contacts are provided by residues 124–127 (NKKD) and 175–183 (GPSGVGKSS). 4 residues coordinate Zn(2+): C257, C262, H264, and C270.

It belongs to the TRAFAC class YlqF/YawG GTPase family. RsgA subfamily. Monomer. Associates with 30S ribosomal subunit, binds 16S rRNA. Requires Zn(2+) as cofactor.

The protein resides in the cytoplasm. Its function is as follows. One of several proteins that assist in the late maturation steps of the functional core of the 30S ribosomal subunit. Helps release RbfA from mature subunits. May play a role in the assembly of ribosomal proteins into the subunit. Circularly permuted GTPase that catalyzes slow GTP hydrolysis, GTPase activity is stimulated by the 30S ribosomal subunit. In Agathobacter rectalis (strain ATCC 33656 / DSM 3377 / JCM 17463 / KCTC 5835 / VPI 0990) (Eubacterium rectale), this protein is Small ribosomal subunit biogenesis GTPase RsgA.